The primary structure comprises 133 residues: Endoribonuclease YbeY (133 aa).

Residues His-105, His-109, and His-115 each contribute to the Zn(2+) site.

It belongs to the endoribonuclease YbeY family. The cofactor is Zn(2+).

The protein localises to the cytoplasm. In terms of biological role, single strand-specific metallo-endoribonuclease involved in late-stage 70S ribosome quality control and in maturation of the 3' terminus of the 16S rRNA. This Lawsonia intracellularis (strain PHE/MN1-00) protein is Endoribonuclease YbeY.